Reading from the N-terminus, the 222-residue chain is GTP cyclohydrolase 1 (222 aa).

Residues cysteine 111, histidine 114, and cysteine 182 each contribute to the Zn(2+) site.

This sequence belongs to the GTP cyclohydrolase I family. As to quaternary structure, toroid-shaped homodecamer, composed of two pentamers of five dimers.

It carries out the reaction GTP + H2O = 7,8-dihydroneopterin 3'-triphosphate + formate + H(+). It functions in the pathway cofactor biosynthesis; 7,8-dihydroneopterin triphosphate biosynthesis; 7,8-dihydroneopterin triphosphate from GTP: step 1/1. This is GTP cyclohydrolase 1 from Klebsiella pneumoniae subsp. pneumoniae (strain ATCC 700721 / MGH 78578).